The primary structure comprises 592 residues: Aspartate--tRNA(Asp/Asn) ligase (592 aa).

Glu-172 is a binding site for L-aspartate. Residues 196–199 (QLFK) form an aspartate region. Residue Arg-218 participates in L-aspartate binding. ATP is bound by residues 218 to 220 (RDE) and Gln-227. His-442 lines the L-aspartate pocket. Position 476 (Glu-476) interacts with ATP. An L-aspartate-binding site is contributed by Arg-483. 528-531 (GWDR) lines the ATP pocket. A disordered region spans residues 553–592 (SGTDPLTGAPTPITPEQRKEAGIDADPYAAAGRPPGRQSA).

Belongs to the class-II aminoacyl-tRNA synthetase family. Type 1 subfamily. As to quaternary structure, homodimer.

The protein resides in the cytoplasm. It carries out the reaction tRNA(Asx) + L-aspartate + ATP = L-aspartyl-tRNA(Asx) + AMP + diphosphate. Its function is as follows. Aspartyl-tRNA synthetase with relaxed tRNA specificity since it is able to aspartylate not only its cognate tRNA(Asp) but also tRNA(Asn). Reaction proceeds in two steps: L-aspartate is first activated by ATP to form Asp-AMP and then transferred to the acceptor end of tRNA(Asp/Asn). The polypeptide is Aspartate--tRNA(Asp/Asn) ligase (Acidothermus cellulolyticus (strain ATCC 43068 / DSM 8971 / 11B)).